A 104-amino-acid chain; its full sequence is Large ribosomal subunit protein uL24 (104 aa).

Belongs to the universal ribosomal protein uL24 family. As to quaternary structure, part of the 50S ribosomal subunit.

In terms of biological role, one of two assembly initiator proteins, it binds directly to the 5'-end of the 23S rRNA, where it nucleates assembly of the 50S subunit. Functionally, one of the proteins that surrounds the polypeptide exit tunnel on the outside of the subunit. This chain is Large ribosomal subunit protein uL24, found in Buchnera aphidicola subsp. Schizaphis graminum (strain Sg).